The following is a 227-amino-acid chain: uncharacterized protein (227 aa).

4 helical membrane passes run 17 to 37 (VGIK…GVFS), 79 to 99 (GFLF…IISI), 112 to 132 (LMTP…LALI), and 181 to 201 (VAVF…ILVF).

Its subcellular location is the cell membrane. This is an uncharacterized protein from Escherichia coli (strain K12).